The chain runs to 676 residues: Envelope glycoprotein (676 aa).

The signal sequence occupies residues 1–32; sequence MGVTGILQLPRDRFKRTSFFLWVIILFQRTFS. Residues 33 to 650 are Extracellular-facing; the sequence is IPLGVIHNST…NDNWWTGWRQ (618 aa). Asparagine 40 carries N-linked (GlcNAc...) asparagine; by host glycosylation. Intrachain disulfides connect cysteine 53–cysteine 609, cysteine 108–cysteine 135, cysteine 121–cysteine 147, cysteine 511–cysteine 556, and cysteine 601–cysteine 608. The interval 54–201 is receptor-binding; the sequence is RDKLSSTNQL…DFFSSHPLRE (148 aa). N-linked (GlcNAc...) asparagine; by host glycans are attached at residues asparagine 204, asparagine 228, asparagine 238, asparagine 257, asparagine 268, asparagine 296, asparagine 317, asparagine 333, asparagine 346, asparagine 386, and asparagine 413. The tract at residues 305–485 is mucin-like region; sequence ELSFTAVSNR…SGKLGLITNT (181 aa). Residues 314-335 show a composition bias toward polar residues; the sequence is RAKNISGQSPARTSSDPGTNTT. Residues 314 to 337 form a disordered region; the sequence is RAKNISGQSPARTSSDPGTNTTTE. Residues 370–478 are disordered; that stretch reads TISTSPQPPT…TGEESASSGK (109 aa). Over residues 414-427 the composition is skewed to low complexity; it reads DSTASDTPPATTAA. Asparagine 436, asparagine 454, and asparagine 462 each carry an N-linked (GlcNAc...) asparagine; by host glycan. Polar residues predominate over residues 447 to 464; the sequence is ATTTSPQNHSETAGNNNT. A fusion peptide region spans residues 524–539; that stretch reads GAAIGLAWIPYFGPAA. A coiled-coil region spans residues 554 to 595; that stretch reads LICGLRQLANETTQALQLFLRATTELRTFSILNRKAIDFLLQ. N-linked (GlcNAc...) asparagine; by host glycosylation occurs at asparagine 563. Positions 615–634 form a coiled coil; sequence WTKNITDKIDQIIHDFVDKT. An N-linked (GlcNAc...) asparagine; by host glycan is attached at asparagine 618. A helical transmembrane segment spans residues 651–671; that stretch reads WIPAGIGVTGVIIAVIALFCI. Residues cysteine 670 and cysteine 672 are each lipidated (S-palmitoyl cysteine; by host). Residues 672–676 lie on the Cytoplasmic side of the membrane; that stretch reads CKFVF.

The protein belongs to the filoviruses glycoprotein family. Homotrimer; each monomer consists of a GP1 and a GP2 subunit linked by disulfide bonds. The resulting peplomers (GP1,2) protrude from the virus surface as spikes. Interacts with host integrin alpha-V/ITGAV. Interacts with host CLEC10A. Binds also to host CD209 and CLEC4M/DC-SIGN(R). Interacts with host FOLR1. Interacts with BST2; this interaction inhibits the antiviral effect of BST2 and this allows viral release from infected cells. Interacts with host FCN1; this interaction enhances viral entry. Interacts with host TLR4; this interaction induces cell death in T-lymphocytes or proinflammatory cytokines and SOCS1 production in monocytes. In terms of assembly, interacts with host entry receptor NPC1. As to quaternary structure, GP1 and GP2delta are part of GP1,2delta soluble complexes released by ectodomain shedding. Post-translationally, the signal peptide region modulates GP's high mannose glycosylation, thereby determining the efficiency of the interactions with DC-SIGN(R). In terms of processing, N-glycosylated. O-glycosylated in the mucin-like region. Post-translationally, palmitoylation of GP2 is not required for its function. In terms of processing, specific enzymatic cleavages in vivo yield mature proteins. The precursor is processed into GP1 and GP2 by host cell furin in the trans Golgi, and maybe by other host proteases, to yield the mature GP1 and GP2 proteins. The cleavage site corresponds to the furin optimal cleavage sequence [KR]-X-[KR]-R. This cleavage does not seem to be required for function. After the internalization of the virus into cell endosomes, GP1 C-terminus is removed by the endosomal proteases cathepsin B, cathepsin L, or both, leaving a 19-kDa N-terminal fragment which is further digested by cathepsin B. Proteolytic processing of GP1,2 by host ADAM17 can remove the transmembrane anchor of GP2 and leads to shedding of complexes consisting in GP1 and truncated GP2 (GP1,2delta).

The protein resides in the virion membrane. It is found in the host cell membrane. Its subcellular location is the secreted. Its function is as follows. Trimeric GP1,2 complexes form the virion surface spikes and mediate the viral entry processes, with GP1 acting as the receptor-binding subunit and GP2 as the membrane fusion subunit. At later times of infection, down-regulates the expression of various host cell surface molecules that are essential for immune surveillance and cell adhesion. Down-modulates several integrins including ITGA1, ITGA2, ITGA3, ITGA4, ITGA5, ITGA6, ITGAV and ITGB1. This decrease in cell adhesion molecules may lead to cell detachment, contributing to the disruption of blood vessel integrity and hemorrhages developed during infection (cytotoxicity). Interacts with host TLR4 and thereby stimulates the differentiation and activation of monocytes leading to bystander death of T-lymphocytes. Down-regulates as well the function of host natural killer cells. Counteracts the antiviral effect of host BST2/tetherin that restricts release of progeny virions from infected cells. However, cooperates with VP40 and host BST2 to activate canonical NF-kappa-B pathway in a manner dependent on neddylation. Functions as a decoy for anti-GP1,2 antibodies thereby contributing to viral immune evasion. Interacts and activates host macrophages and dendritic cells inducing up-regulation of cytokine transcription. This effect is mediated throught activation of host TLR4. Functionally, responsible for binding to the receptor(s) on target cells. Interacts with CD209/DC-SIGN and CLEC4M/DC-SIGNR which act as cofactors for virus entry into dendritic cells (DCs) and endothelial cells. Binding to the macrophage specific lectin CLEC10A also seems to enhance virus infectivity. Interaction with FOLR1/folate receptor alpha may be a cofactor for virus entry in some cell types, although results are contradictory. Members of the Tyro3 receptor tyrosine kinase family also seem to be cell entry factors in filovirus infection. Once attached, the virions are internalized through clathrin-dependent endocytosis and/or macropinocytosis. After internalization of the virus into the endosomes of the host cell, proteolysis of GP1 by two cysteine proteases, CTSB/cathepsin B and CTSL/cathepsin L removes the glycan cap and allows GP1 binding to the host entry receptor NPC1. NPC1-binding, Ca(2+) and acidic pH induce a conformational change of GP2, which unmasks its fusion peptide and permit membranes fusion. In terms of biological role, acts as a class I viral fusion protein. Under the current model, the protein has at least 3 conformational states: pre-fusion native state, pre-hairpin intermediate state, and post-fusion hairpin state. During viral and target cell membrane fusion, the coiled coil regions (heptad repeats) assume a trimer-of-hairpins structure, positioning the fusion peptide in close proximity to the C-terminal region of the ectodomain. The formation of this structure appears to drive apposition and subsequent fusion of viral and target cell membranes. Responsible for penetration of the virus into the cell cytoplasm by mediating the fusion of the membrane of the endocytosed virus particle with the endosomal membrane. Low pH in endosomes induces an irreversible conformational change in GP2, releasing the fusion hydrophobic peptide. This Zaire ebolavirus (strain Kikwit-95) (ZEBOV) protein is Envelope glycoprotein (GP).